Consider the following 188-residue polypeptide: Archaemetzincin (188 aa).

Zn(2+) is bound at residue histidine 137. The Proton acceptor role is filled by glutamate 138. The Zn(2+) site is built by histidine 141, histidine 147, cysteine 148, cysteine 153, cysteine 172, and cysteine 175.

It belongs to the peptidase M54 family. Monomer. It depends on Zn(2+) as a cofactor.

In terms of biological role, probable zinc metalloprotease whose natural substrate is unknown. This is Archaemetzincin from Pyrococcus horikoshii (strain ATCC 700860 / DSM 12428 / JCM 9974 / NBRC 100139 / OT-3).